A 434-amino-acid chain; its full sequence is 3-phosphoshikimate 1-carboxyvinyltransferase (434 aa).

Residues K22, S23, and R27 each contribute to the 3-phosphoshikimate site. Phosphoenolpyruvate is bound at residue K22. Residues G93 and R121 each contribute to the phosphoenolpyruvate site. Residues S168, S169, Q170, S199, D320, and K347 each coordinate 3-phosphoshikimate. Residue Q170 coordinates phosphoenolpyruvate. Catalysis depends on D320, which acts as the Proton acceptor. Residues R351, R394, and K419 each coordinate phosphoenolpyruvate.

This sequence belongs to the EPSP synthase family. Monomer.

It is found in the cytoplasm. It carries out the reaction 3-phosphoshikimate + phosphoenolpyruvate = 5-O-(1-carboxyvinyl)-3-phosphoshikimate + phosphate. It functions in the pathway metabolic intermediate biosynthesis; chorismate biosynthesis; chorismate from D-erythrose 4-phosphate and phosphoenolpyruvate: step 6/7. Functionally, catalyzes the transfer of the enolpyruvyl moiety of phosphoenolpyruvate (PEP) to the 5-hydroxyl of shikimate-3-phosphate (S3P) to produce enolpyruvyl shikimate-3-phosphate and inorganic phosphate. This chain is 3-phosphoshikimate 1-carboxyvinyltransferase, found in Burkholderia multivorans (strain ATCC 17616 / 249).